The chain runs to 571 residues: Proline--tRNA ligase (571 aa).

The protein belongs to the class-II aminoacyl-tRNA synthetase family. ProS type 1 subfamily. As to quaternary structure, homodimer.

It localises to the cytoplasm. It carries out the reaction tRNA(Pro) + L-proline + ATP = L-prolyl-tRNA(Pro) + AMP + diphosphate. Catalyzes the attachment of proline to tRNA(Pro) in a two-step reaction: proline is first activated by ATP to form Pro-AMP and then transferred to the acceptor end of tRNA(Pro). As ProRS can inadvertently accommodate and process non-cognate amino acids such as alanine and cysteine, to avoid such errors it has two additional distinct editing activities against alanine. One activity is designated as 'pretransfer' editing and involves the tRNA(Pro)-independent hydrolysis of activated Ala-AMP. The other activity is designated 'posttransfer' editing and involves deacylation of mischarged Ala-tRNA(Pro). The misacylated Cys-tRNA(Pro) is not edited by ProRS. The chain is Proline--tRNA ligase from Ectopseudomonas mendocina (strain ymp) (Pseudomonas mendocina).